The sequence spans 199 residues: Recombination protein RecR (199 aa).

The C4-type zinc finger occupies 58 to 73 (CKICFNITDKEVCDIC). One can recognise a Toprim domain in the interval 81 to 176 (STICVVSHPM…KVTRIAHGIP (96 aa)).

This sequence belongs to the RecR family.

May play a role in DNA repair. It seems to be involved in an RecBC-independent recombinational process of DNA repair. It may act with RecF and RecO. This chain is Recombination protein RecR, found in Caldanaerobacter subterraneus subsp. tengcongensis (strain DSM 15242 / JCM 11007 / NBRC 100824 / MB4) (Thermoanaerobacter tengcongensis).